The following is a 210-amino-acid chain: ATP-dependent Clp protease proteolytic subunit (210 aa).

Catalysis depends on Ser107, which acts as the Nucleophile. His132 is a catalytic residue.

Belongs to the peptidase S14 family. Fourteen ClpP subunits assemble into 2 heptameric rings which stack back to back to give a disk-like structure with a central cavity, resembling the structure of eukaryotic proteasomes.

Its subcellular location is the cytoplasm. The catalysed reaction is Hydrolysis of proteins to small peptides in the presence of ATP and magnesium. alpha-casein is the usual test substrate. In the absence of ATP, only oligopeptides shorter than five residues are hydrolyzed (such as succinyl-Leu-Tyr-|-NHMec, and Leu-Tyr-Leu-|-Tyr-Trp, in which cleavage of the -Tyr-|-Leu- and -Tyr-|-Trp bonds also occurs).. Functionally, cleaves peptides in various proteins in a process that requires ATP hydrolysis. Has a chymotrypsin-like activity. Plays a major role in the degradation of misfolded proteins. This Zymomonas mobilis subsp. mobilis (strain ATCC 31821 / ZM4 / CP4) protein is ATP-dependent Clp protease proteolytic subunit.